The following is a 356-amino-acid chain: Phosphoribosylformylglycinamidine cyclo-ligase (356 aa).

The protein belongs to the AIR synthase family.

It is found in the cytoplasm. The catalysed reaction is 2-formamido-N(1)-(5-O-phospho-beta-D-ribosyl)acetamidine + ATP = 5-amino-1-(5-phospho-beta-D-ribosyl)imidazole + ADP + phosphate + H(+). It participates in purine metabolism; IMP biosynthesis via de novo pathway; 5-amino-1-(5-phospho-D-ribosyl)imidazole from N(2)-formyl-N(1)-(5-phospho-D-ribosyl)glycinamide: step 2/2. This chain is Phosphoribosylformylglycinamidine cyclo-ligase, found in Nitrobacter hamburgensis (strain DSM 10229 / NCIMB 13809 / X14).